Here is a 242-residue protein sequence, read N- to C-terminus: tRNA pseudouridine synthase A (242 aa).

The active-site Nucleophile is Asp51. Position 107 (Tyr107) interacts with substrate.

This sequence belongs to the tRNA pseudouridine synthase TruA family. Homodimer.

The enzyme catalyses uridine(38/39/40) in tRNA = pseudouridine(38/39/40) in tRNA. Formation of pseudouridine at positions 38, 39 and 40 in the anticodon stem and loop of transfer RNAs. This chain is tRNA pseudouridine synthase A, found in Helicobacter pylori (strain Shi470).